The chain runs to 258 residues: Chymotrypsin-like elastase family member 1 (258 aa).

An N-terminal signal peptide occupies residues 1 to 8 (MLVLYGHS). The propeptide at 9–18 (TQDLPETNAR) is activation peptide. The region spanning 19 to 256 (VVGGTEAGRN…YISWINNVIA (238 aa)) is the Peptidase S1 domain. Cysteines 48 and 64 form a disulfide. The active-site Charge relay system is the His-63. Positions 77, 79, 82, and 87 each coordinate Ca(2+). Asn-79 carries N-linked (GlcNAc...) asparagine glycosylation. Asp-111 serves as the catalytic Charge relay system. 3 disulfide bridges follow: Cys-145-Cys-212, Cys-176-Cys-192, and Cys-202-Cys-232. Catalysis depends on Ser-206, which acts as the Charge relay system. Asn-233 carries an N-linked (GlcNAc...) asparagine glycan.

The protein belongs to the peptidase S1 family. Elastase subfamily. The cofactor is Ca(2+). In terms of tissue distribution, basal layers of epidermis (at protein level). Not expressed in the pancreas.

Its subcellular location is the secreted. It catalyses the reaction Hydrolysis of proteins, including elastin. Preferential cleavage: Ala-|-Xaa.. Functionally, serine proteases that hydrolyze many proteins in addition to elastin. This Homo sapiens (Human) protein is Chymotrypsin-like elastase family member 1 (CELA1).